The primary structure comprises 606 residues: MAQTPSSTASTEVAKYVQTQNGIPPSNPVSSAMDPYHACSILQQLKAMYDEGKLTDIVVQVDHGKHFSCHRNVLAAISPYFRSMFTSGLTESTQKEVRLVGIEAESMQLVLNYAYTSRVQLTEANVQALFTAASIFQIPSLQDQCAQYMISRLEPQNCIGVFSFADHYGHQELKEKAQDYIRKKFLYVTKEQEFLHLRKDQLISILNSDDLDVEKEEHVYDSIISWYEHEQETREMHLPEIFAKCIRMPLMEETFVEQIPPIFAQAMPINRVQKGKISANCCTRRLGMTASEMIICFEAANKHSGKKQTVPCLDTLTGKVYKLCKPPGDLREVGILVTPDNELYIAGGYRPSNNDVCIDHKAESDFWLYDHSSNRWLPKAPLLRARIGCKLVHCCGKLYAIGGRVYEGDGRNPLKSVECYDTRDNCWTAVSLMPVAMEFHSAVEYKDKIYILQGEVFLCYDPPRDYWCYLTPMTAPRVQGMAAVYKDSIYYVAGIRGNHRVLTVEAYDVEQNRWTRKKDLPCEQSSNPYIKLVVFKSKLHLFVRATQVSVEEFVFRTSRKNSLYQYDEIADSWKKVYETPERLWDLGRHFECAVAKLYPQCLQKVL.

One can recognise a BTB domain in the interval 55–123; it reads TDIVVQVDHG…AYTSRVQLTE (69 aa). The BACK domain maps to 158–258; the sequence is CIGVFSFADH…PLMEETFVEQ (101 aa). Kelch repeat units follow at residues 342 to 396, 397 to 447, 449 to 487, 488 to 534, and 546 to 593; these read ELYI…HCCG, KLYA…EYKD, IYIL…VYKD, SIYY…KLVV, and TQVS…FECA.

The protein belongs to the KBTBD8 family. Component of the BCR(KBTBD8) E3 ubiquitin ligase complex.

The protein localises to the cytoplasm. Its subcellular location is the cytoskeleton. It is found in the spindle. It localises to the golgi apparatus. Its function is as follows. Substrate-specific adapter of a BCR (BTB-CUL3-RBX1) E3 ubiquitin ligase complex that acts as a regulator of neural crest specification. The BCR(KBTBD8) complex acts by mediating monoubiquitination of target proteins. This chain is Kelch repeat and BTB domain-containing protein 8 (kbtbd8), found in Xenopus tropicalis (Western clawed frog).